Consider the following 385-residue polypeptide: Putative transporter YthQ (385 aa).

The next 8 helical transmembrane spans lie at 24–44, 67–87, 106–128, 133–155, 176–193, 197–214, 304–324, and 365–385; these read AVID…FVIY, WLYA…FLME, YALL…IVLP, SVLI…HIFF, TLVR…IVFT, LLAL…IRSL, AFTV…LLVY, and ILHY…LLFT.

Its subcellular location is the cell membrane. This chain is Putative transporter YthQ (ythQ), found in Bacillus subtilis (strain 168).